The chain runs to 436 residues: Alpha-2 adrenergic receptor (436 aa).

Residues 1–27 (MDVTQSNATKDDANITVTPWPYTETAA) are Extracellular-facing. Asparagine 7 and asparagine 14 each carry an N-linked (GlcNAc...) asparagine glycan. Residues 28–52 (AFIILVVSVIILVSIVGNVLVIVAV) form a helical membrane-spanning segment. Over 53–64 (LTSRALRAPQNL) the chain is Cytoplasmic. The helical transmembrane segment at 65-90 (FLVSLACADILVATLVIPFSLANEIM) threads the bilayer. The Extracellular segment spans residues 91–100 (GYWFFGSTWC). Cysteine 100 and cysteine 173 are disulfide-bonded. A helical membrane pass occupies residues 101-123 (AFYLALDVLFCTSSIVHLCAISL). The Cytoplasmic segment spans residues 124–144 (DRYWSVTKAVSYNLKRTPKRI). Residues 145–167 (KSMIAVVWVISAVISFPPLIMTK) traverse the membrane as a helical segment. The Extracellular portion of the chain corresponds to 168-178 (HDEKECLINDE). A helical membrane pass occupies residues 179–202 (TWYILSSSLVSFFAPGFIMITVYC). Topologically, residues 203-329 (KIYRVAKQRS…QMREKRFTFV (127 aa)) are cytoplasmic. Residues 238–280 (KFEKESPSSNSSESNQRQEELDDIDLEESATSDNKPKSSRFSN) are disordered. Residues 257-267 (ELDDIDLEESA) show a composition bias toward acidic residues. Residues 330–353 (LTVVMGVFVLCWFPFFFTYSLHAI) form a helical membrane-spanning segment. At 354–366 (CGDSCEPPEALFK) the chain is on the extracellular side. A helical membrane pass occupies residues 367-387 (LFFWIGYCNSSVNPIIYTIFN). Over 388–436 (RDFRKAFKKICLLDCAAHLRDSCLGTLGRLNAKCIFECHQKSNQEETAN) the chain is Cytoplasmic.

Belongs to the G-protein coupled receptor 1 family.

Its subcellular location is the cell membrane. Its function is as follows. Alpha-2 adrenergic receptors mediate the catecholamine-induced inhibition of adenylate cyclase through the action of G proteins. The polypeptide is Alpha-2 adrenergic receptor (Carassius auratus (Goldfish)).